Reading from the N-terminus, the 219-residue chain is MNGPDTKIPQATAKRLPLYYRFIQSLYNSGKLRVSSAELSEAVKVDSATIRRDFSYFGALGKKGYGYNVQHLLTFFRKTLNQDEVTNVALIGVGHLGTAFANYNFLKNNSTRIVIAFDADEDKVGTTTQDVPIYHVSDMKEQIKANHVDVAILTVPSQFAQSVADELVEYGVTGILNFTPARLNVPAHVRVHHIDLSIELQSLVYFMKHYSQSAEGVKS.

Positions 18 to 57 (LYYRFIQSLYNSGKLRVSSAELSEAVKVDSATIRRDFSYF) form a DNA-binding region, H-T-H motif. 92 to 97 (GVGHLG) provides a ligand contact to NAD(+).

The protein belongs to the transcriptional regulatory Rex family. As to quaternary structure, homodimer.

The protein resides in the cytoplasm. Its function is as follows. Modulates transcription in response to changes in cellular NADH/NAD(+) redox state. The sequence is that of Redox-sensing transcriptional repressor Rex from Exiguobacterium sibiricum (strain DSM 17290 / CCUG 55495 / CIP 109462 / JCM 13490 / 255-15).